The primary structure comprises 291 residues: ATP synthase gamma chain (291 aa).

It belongs to the ATPase gamma chain family. F-type ATPases have 2 components, CF(1) - the catalytic core - and CF(0) - the membrane proton channel. CF(1) has five subunits: alpha(3), beta(3), gamma(1), delta(1), epsilon(1). CF(0) has three main subunits: a, b and c.

The protein localises to the cell inner membrane. Produces ATP from ADP in the presence of a proton gradient across the membrane. The gamma chain is believed to be important in regulating ATPase activity and the flow of protons through the CF(0) complex. In Chlorobium limicola (strain DSM 245 / NBRC 103803 / 6330), this protein is ATP synthase gamma chain.